Reading from the N-terminus, the 380-residue chain is MAHPIRKTHPLLKIINGSFVDLPTPSNISYLWNFGSLLGICLITQIATGLFLAMHYTADTSSAFSSVVHICRDVNYGWLVRNIHANGASFFFICIYLHIGRGLYYGSYMYKETWNIGVILLFLVMATAFVGYVLPWGQMSFWGATVITNLLSAVPYMGDSLVQWIWGGFSVDKATLTRFFAFHFLFPFLIVGASILHLLFLHETGSNNPTGISSNTDKLPFHPYFSYKDTLGFLIMLMMLTLLSMLSPNLLGDPDNFTPANPLVTPPHIQPEWYFLFAYAILRSIPNKLGGVLALLASIMILMLIPMIHTSKQRSLTFRPMTQFLFWLMVSNTLILTWIGGQPVEQPFIEIGQAASILYFLLFIIFMPLSGWWENKLMKW.

Transmembrane regions (helical) follow at residues 34–54 (FGSL…FLAM), 78–99 (WLVR…YLHI), 114–134 (WNIG…GYVL), and 179–199 (FFAF…LHLL). Histidine 84 and histidine 98 together coordinate heme b. Heme b contacts are provided by histidine 183 and histidine 197. Histidine 202 contributes to the a ubiquinone binding site. Helical transmembrane passes span 227 to 247 (YKDT…SMLS), 289 to 309 (LGGV…PMIH), 321 to 341 (MTQF…WIGG), and 348 to 368 (FIEI…IFMP).

It belongs to the cytochrome b family. As to quaternary structure, the cytochrome bc1 complex contains 3 respiratory subunits (MT-CYB, CYC1 and UQCRFS1), 2 core proteins (UQCRC1 and UQCRC2) and probably 6 low-molecular weight proteins. The cofactor is heme b.

It is found in the mitochondrion inner membrane. Its function is as follows. Component of the ubiquinol-cytochrome c reductase complex (complex III or cytochrome b-c1 complex) that is part of the mitochondrial respiratory chain. The b-c1 complex mediates electron transfer from ubiquinol to cytochrome c. Contributes to the generation of a proton gradient across the mitochondrial membrane that is then used for ATP synthesis. The sequence is that of Cytochrome b (mt-cyb) from Ranodon sibiricus (Siberian salamander).